An 84-amino-acid polypeptide reads, in one-letter code: RNA-binding protein Hfq (84 aa).

The Sm domain occupies 10–69 (EPFLNTLRREHVPVSIYLVNGIKLQGQIESFDQYVVLLRNTVTQMVFKHAISTIVPGRAV).

It belongs to the Hfq family. As to quaternary structure, homohexamer.

In terms of biological role, RNA chaperone that binds small regulatory RNA (sRNAs) and mRNAs to facilitate mRNA translational regulation in response to envelope stress, environmental stress and changes in metabolite concentrations. Also binds with high specificity to tRNAs. The protein is RNA-binding protein Hfq of Verminephrobacter eiseniae (strain EF01-2).